A 413-amino-acid chain; its full sequence is Serine hydroxymethyltransferase (413 aa).

(6S)-5,6,7,8-tetrahydrofolate contacts are provided by residues Leu117 and 121-123 (GHL). N6-(pyridoxal phosphate)lysine is present on Lys226. Residues Glu239 and 349 to 351 (SPF) each bind (6S)-5,6,7,8-tetrahydrofolate.

The protein belongs to the SHMT family. Homodimer. Requires pyridoxal 5'-phosphate as cofactor.

The protein resides in the cytoplasm. The enzyme catalyses (6R)-5,10-methylene-5,6,7,8-tetrahydrofolate + glycine + H2O = (6S)-5,6,7,8-tetrahydrofolate + L-serine. It functions in the pathway one-carbon metabolism; tetrahydrofolate interconversion. It participates in amino-acid biosynthesis; glycine biosynthesis; glycine from L-serine: step 1/1. Functionally, catalyzes the reversible interconversion of serine and glycine with tetrahydrofolate (THF) serving as the one-carbon carrier. This reaction serves as the major source of one-carbon groups required for the biosynthesis of purines, thymidylate, methionine, and other important biomolecules. Also exhibits THF-independent aldolase activity toward beta-hydroxyamino acids, producing glycine and aldehydes, via a retro-aldol mechanism. This Bacillus anthracis (strain A0248) protein is Serine hydroxymethyltransferase.